We begin with the raw amino-acid sequence, 179 residues long: Inosine/xanthosine triphosphatase (179 aa).

A Mg(2+)-binding site is contributed by Glu-71. 71–72 (EA) contributes to the substrate binding site.

Belongs to the YjjX NTPase family. In terms of assembly, homodimer. Mg(2+) is required as a cofactor. It depends on Mn(2+) as a cofactor.

It carries out the reaction XTP + H2O = XDP + phosphate + H(+). It catalyses the reaction ITP + H2O = IDP + phosphate + H(+). In terms of biological role, phosphatase that hydrolyzes non-canonical purine nucleotides such as XTP and ITP to their respective diphosphate derivatives. Probably excludes non-canonical purines from DNA/RNA precursor pool, thus preventing their incorporation into DNA/RNA and avoiding chromosomal lesions. This is Inosine/xanthosine triphosphatase from Shewanella sp. (strain MR-7).